We begin with the raw amino-acid sequence, 350 residues long: Phosphoribosylformylglycinamidine cyclo-ligase (350 aa).

The protein belongs to the AIR synthase family.

Its subcellular location is the cytoplasm. It catalyses the reaction 2-formamido-N(1)-(5-O-phospho-beta-D-ribosyl)acetamidine + ATP = 5-amino-1-(5-phospho-beta-D-ribosyl)imidazole + ADP + phosphate + H(+). The protein operates within purine metabolism; IMP biosynthesis via de novo pathway; 5-amino-1-(5-phospho-D-ribosyl)imidazole from N(2)-formyl-N(1)-(5-phospho-D-ribosyl)glycinamide: step 2/2. In Cupriavidus necator (strain ATCC 17699 / DSM 428 / KCTC 22496 / NCIMB 10442 / H16 / Stanier 337) (Ralstonia eutropha), this protein is Phosphoribosylformylglycinamidine cyclo-ligase.